The primary structure comprises 324 residues: Signal peptidase I (324 aa).

Topologically, residues 1–3 (MAN) are periplasmic. A helical membrane pass occupies residues 4-22 (MFALILVIATLVTGILWCV). Over 23–58 (DKFVFAPKRRARQAAAQTASGDALDNATLNKVAPKP) the chain is Cytoplasmic. A helical transmembrane segment spans residues 59 to 77 (GWLETGASVFPVLAIVLIV). Topologically, residues 78-324 (RSFLYEPFQI…VRLSRIGGIH (247 aa)) are periplasmic. Active-site residues include serine 91 and lysine 146.

It belongs to the peptidase S26 family.

Its subcellular location is the cell inner membrane. It catalyses the reaction Cleavage of hydrophobic, N-terminal signal or leader sequences from secreted and periplasmic proteins.. This Salmonella typhi protein is Signal peptidase I (lepB).